A 398-amino-acid chain; its full sequence is 8-amino-7-oxononanoate synthase (398 aa).

Arginine 26 contributes to the substrate binding site. 113 to 114 provides a ligand contact to pyridoxal 5'-phosphate; it reads GF. Histidine 138 is a binding site for substrate. Residues serine 181, histidine 209, and threonine 238 each coordinate pyridoxal 5'-phosphate. At lysine 241 the chain carries N6-(pyridoxal phosphate)lysine. A substrate-binding site is contributed by threonine 355.

The protein belongs to the class-II pyridoxal-phosphate-dependent aminotransferase family. BioF subfamily. Homodimer. Pyridoxal 5'-phosphate is required as a cofactor.

The catalysed reaction is 6-carboxyhexanoyl-[ACP] + L-alanine + H(+) = (8S)-8-amino-7-oxononanoate + holo-[ACP] + CO2. It functions in the pathway cofactor biosynthesis; biotin biosynthesis. Functionally, catalyzes the decarboxylative condensation of pimeloyl-[acyl-carrier protein] and L-alanine to produce 8-amino-7-oxononanoate (AON), [acyl-carrier protein], and carbon dioxide. The sequence is that of 8-amino-7-oxononanoate synthase from Aeromonas salmonicida (strain A449).